We begin with the raw amino-acid sequence, 440 residues long: UDP-N-acetylglucosamine 1-carboxyvinyltransferase 1 (440 aa).

Position 22-23 (22-23 (KN)) interacts with phosphoenolpyruvate. Arg-93 is a UDP-N-acetyl-alpha-D-glucosamine binding site. The Proton donor role is filled by Cys-117. 2-(S-cysteinyl)pyruvic acid O-phosphothioketal is present on Cys-117. Residues 122–126 (RPIDQ), Asp-306, and Val-328 each bind UDP-N-acetyl-alpha-D-glucosamine.

The protein belongs to the EPSP synthase family. MurA subfamily.

Its subcellular location is the cytoplasm. It catalyses the reaction phosphoenolpyruvate + UDP-N-acetyl-alpha-D-glucosamine = UDP-N-acetyl-3-O-(1-carboxyvinyl)-alpha-D-glucosamine + phosphate. The protein operates within cell wall biogenesis; peptidoglycan biosynthesis. In terms of biological role, cell wall formation. Adds enolpyruvyl to UDP-N-acetylglucosamine. The polypeptide is UDP-N-acetylglucosamine 1-carboxyvinyltransferase 1 (Halalkalibacterium halodurans (strain ATCC BAA-125 / DSM 18197 / FERM 7344 / JCM 9153 / C-125) (Bacillus halodurans)).